A 218-amino-acid chain; its full sequence is Ribose-5-phosphate isomerase A (218 aa).

Residues threonine 27 to threonine 30, aspartate 80 to aspartate 83, and lysine 93 to glycine 96 contribute to the substrate site. The active-site Proton acceptor is the glutamate 102. Lysine 120 serves as a coordination point for substrate.

The protein belongs to the ribose 5-phosphate isomerase family. As to quaternary structure, homodimer.

The catalysed reaction is aldehydo-D-ribose 5-phosphate = D-ribulose 5-phosphate. It functions in the pathway carbohydrate degradation; pentose phosphate pathway; D-ribose 5-phosphate from D-ribulose 5-phosphate (non-oxidative stage): step 1/1. In terms of biological role, catalyzes the reversible conversion of ribose-5-phosphate to ribulose 5-phosphate. The protein is Ribose-5-phosphate isomerase A of Thiobacillus denitrificans (strain ATCC 25259 / T1).